Here is a 324-residue protein sequence, read N- to C-terminus: D-alanine--D-alanine ligase (324 aa).

One can recognise an ATP-grasp domain in the interval 116–311 (KQVWHTLGIP…FQQLVLAILA (196 aa)). 142 to 197 (ATELGFPLIVKPAHEGSSIGMAKVSSASELIDAWKAASTYDSQVLVEQWIHGPEFT) contacts ATP. Positions 265, 278, and 280 each coordinate Mg(2+).

Belongs to the D-alanine--D-alanine ligase family. Mg(2+) is required as a cofactor. It depends on Mn(2+) as a cofactor.

Its subcellular location is the cytoplasm. It carries out the reaction 2 D-alanine + ATP = D-alanyl-D-alanine + ADP + phosphate + H(+). The protein operates within cell wall biogenesis; peptidoglycan biosynthesis. Its function is as follows. Cell wall formation. In Pseudomonas fluorescens (strain Pf0-1), this protein is D-alanine--D-alanine ligase.